Here is a 445-residue protein sequence, read N- to C-terminus: Arginine biosynthesis bifunctional protein ArgJ, mitochondrial (445 aa).

Substrate-binding residues include T189, K215, T226, E312, N440, and S445. T226 acts as the Nucleophile in catalysis.

Belongs to the ArgJ family. In terms of assembly, heterodimer of an alpha and a beta chain. Post-translationally, the alpha and beta chains are autoproteolytically processed from a single precursor protein within the mitochondrion.

The protein resides in the mitochondrion matrix. The enzyme catalyses N(2)-acetyl-L-ornithine + L-glutamate = N-acetyl-L-glutamate + L-ornithine. It carries out the reaction L-glutamate + acetyl-CoA = N-acetyl-L-glutamate + CoA + H(+). Its pathway is amino-acid biosynthesis; L-arginine biosynthesis; L-ornithine and N-acetyl-L-glutamate from L-glutamate and N(2)-acetyl-L-ornithine (cyclic): step 1/1. It functions in the pathway amino-acid biosynthesis; L-arginine biosynthesis; N(2)-acetyl-L-ornithine from L-glutamate: step 1/4. Its function is as follows. Catalyzes two activities which are involved in the cyclic version of arginine biosynthesis: the synthesis of acetylglutamate from glutamate and acetyl-CoA, and of ornithine by transacetylation between acetylornithine and glutamate. In Schizosaccharomyces pombe (strain 972 / ATCC 24843) (Fission yeast), this protein is Arginine biosynthesis bifunctional protein ArgJ, mitochondrial.